The following is a 205-amino-acid chain: Glycerol-3-phosphate acyltransferase (205 aa).

6 consecutive transmembrane segments (helical) span residues 5–25, 54–74, 87–107, 117–137, 138–158, and 162–182; these read LALGIWAASYLAGSLPAGYLA, GPAAAVLLFDVFKGLFAVWLA, IVLGAGLAAIVGHSWPVWLAF, VGLLLGMHWPVALTVAAVWGV, CFAVTRIVSFASIVAAAATPL, and LWRAPLPFTLFGLLGGIYIVW.

This sequence belongs to the PlsY family. As to quaternary structure, probably interacts with PlsX.

Its subcellular location is the cell inner membrane. The catalysed reaction is an acyl phosphate + sn-glycerol 3-phosphate = a 1-acyl-sn-glycero-3-phosphate + phosphate. Its pathway is lipid metabolism; phospholipid metabolism. Catalyzes the transfer of an acyl group from acyl-phosphate (acyl-PO(4)) to glycerol-3-phosphate (G3P) to form lysophosphatidic acid (LPA). This enzyme utilizes acyl-phosphate as fatty acyl donor, but not acyl-CoA or acyl-ACP. This is Glycerol-3-phosphate acyltransferase from Gloeobacter violaceus (strain ATCC 29082 / PCC 7421).